Reading from the N-terminus, the 268-residue chain is Interleukin-1 alpha (268 aa).

Positions 1 to 112 are excised as a propeptide; it reads MAKVPDLFED…DTEEEIIKPR (112 aa). The residue at position 82 (Lys82) is an N6-acetyllysine. A nuclear localization signal (NLS) region spans residues 82–86; that stretch reads KKRRL. Ser87 is subject to Phosphoserine. Residues Asn102 and Asn141 are each glycosylated (N-linked (GlcNAc...) asparagine).

It belongs to the IL-1 family. As to quaternary structure, monomer. Interacts with TMED10; the interaction mediates the translocation from the cytoplasm into the ERGIC (endoplasmic reticulum-Golgi intermediate compartment) and thereby secretion. Interacts with IL1R1. Interacts with S100A13; this interaction is the first step in the export of IL1A, followed by direct translocation of this complex across the plasma membrane. Post-translationally, acetylated within its nuclear localization sequence, which impacts subcellular localization. Proteolytic processed by CAPN1 in a calcium-dependent manner. Cleavage from 31 kDa precursor to 18 kDa biologically active molecules. In terms of processing, phosphorylated. Phosphorylation greatly enhances susceptibility to digestion and promotes the conversion of pre-IL1A alpha to the biologically active IL1A.

The protein localises to the nucleus. The protein resides in the cytoplasm. It localises to the secreted. Its function is as follows. Cytokine constitutively present intracellularly in nearly all resting non-hematopoietic cells that plays an important role in inflammation and bridges the innate and adaptive immune systems. After binding to its receptor IL1R1 together with its accessory protein IL1RAP, forms the high affinity interleukin-1 receptor complex. Signaling involves the recruitment of adapter molecules such as MYD88, IRAK1 or IRAK4. In turn, mediates the activation of NF-kappa-B and the three MAPK pathways p38, p42/p44 and JNK pathways. Within the cell, acts as an alarmin and cell death results in its liberation in the extracellular space after disruption of the cell membrane to induce inflammation and alert the host to injury or damage. In addition to its role as a danger signal, which occurs when the cytokine is passively released by cell necrosis, directly senses DNA damage and acts as signal for genotoxic stress without loss of cell integrity. This chain is Interleukin-1 alpha (IL1A), found in Capra hircus (Goat).